The primary structure comprises 114 residues: Ferritin-like protein (114 aa).

Residues glutamate 29, glutamate 59, and histidine 62 each coordinate Fe cation. Positions 86-114 (FTDKPITEIEEETSGGSENTGGDLGIRKL) are cargo-loading peptide. The disordered stretch occupies residues 94–114 (IEEETSGGSENTGGDLGIRKL). Residues 103-114 (ENTGGDLGIRKL) are compositionally biased toward gly residues.

It belongs to the ferritin-like superfamily. Probably forms a decamer which binds to the pentameric axis of the interior of the protein shell; as the Flp cargo protein is flexible, packing into the shell is not rigid. 3, 4 or 5 cargo decamers bind inside the encapulin nanocompartment. Fe cation serves as cofactor.

Its subcellular location is the encapsulin nanocompartment. Functionally, cargo protein of a type 1 encapsulin nanocompartment. A ferritin-like protein that probably stores iron in the encapsulin nanocompartment. In Thermotoga maritima (strain ATCC 43589 / DSM 3109 / JCM 10099 / NBRC 100826 / MSB8), this protein is Ferritin-like protein.